A 211-amino-acid polypeptide reads, in one-letter code: Probable calcium-binding protein CML11 (211 aa).

Disordered stretches follow at residues Met1–Thr22 and Ser40–Asp60. Low complexity predominate over residues Gln44–Gln53. EF-hand domains lie at Asp60–Lys95, Pro96–Tyr131, Tyr136–Ala171, and Leu172–Asp207. Residues Asp73, Asn75, Asp77, Ser79, Glu84, Asp109, Asn111, Asn113, Glu120, Asp149, Asp151, Asn153, Glu160, Asp185, Asp187, Asp189, Arg191, and Glu196 each coordinate Ca(2+).

Its function is as follows. Potential calcium sensor. The protein is Probable calcium-binding protein CML11 (CML11) of Oryza sativa subsp. japonica (Rice).